Consider the following 345-residue polypeptide: MGVCGYLFLPWKCLVVVSLRLLFLVPTGVPVRSGDATFPKAMDNVTVRQGESATLRCTIDDRVTRVAWLNRSTILYAGNDKWSIDPRVIILVNTPTQYSIMIQNVDVYDEGPYTCSVQTDNHPKTSRVHLIVQVPPQIMNISSDITVNEGSSVTLLCLAIGRPEPTVTWRHLSVKEGQGFVSEDEYLEISDIKRDQSGEYECSALNDVAAPDVRKVKITVNYPPYISKAKNTGVSVGQKGILSCEASAVPMAEFQWFKEETRLATGLDGMRIENKGRMSTLTFFNVSEKDYGNYTCVATNKLGNTNASITLYGPGAVIDGVNSASRALACLWLSGTLLAHFFIKF.

An N-terminal signal peptide occupies residues 1-27; the sequence is MGVCGYLFLPWKCLVVVSLRLLFLVPT. Ig-like C2-type domains lie at 39 to 126, 136 to 219, and 223 to 310; these read PKAM…PKTS, PQIM…VKIT, and PPYI…ASIT. Residues Asn44, Asn70, and Asn140 are each glycosylated (N-linked (GlcNAc...) asparagine). Cys57 and Cys115 form a disulfide bridge. 2 disulfide bridges follow: Cys157/Cys202 and Cys244/Cys296. N-linked (GlcNAc...) asparagine glycans are attached at residues Asn285, Asn293, and Asn306. Asn322 carries the GPI-anchor amidated asparagine lipid modification. A propeptide spans 323–345 (removed in mature form); that stretch reads SASRALACLWLSGTLLAHFFIKF.

The protein belongs to the immunoglobulin superfamily. IgLON family.

The protein resides in the cell membrane. In terms of biological role, binds opioids in the presence of acidic lipids; probably involved in cell contact. The chain is Opioid-binding protein/cell adhesion molecule (OPCML) from Homo sapiens (Human).